Consider the following 545-residue polypeptide: Degenerin-like protein asic-2 (545 aa).

The Cytoplasmic segment spans residues 1 to 34 (MRGGGFVQIFKDFSNWSTVAVVPHVANANNKISR). A helical transmembrane segment spans residues 35–55 (IFWIAIFLFVLGMFAYELYIL). The Extracellular portion of the chain corresponds to 56 to 457 (IAKFFSYPAT…NVINDLGGQA (402 aa)). Cysteine 83 and cysteine 191 form a disulfide bridge. Residue asparagine 201 is glycosylated (N-linked (GlcNAc...) asparagine). 5 cysteine pairs are disulfide-bonded: cysteine 284–cysteine 370, cysteine 305–cysteine 366, cysteine 309–cysteine 364, cysteine 318–cysteine 343, and cysteine 320–cysteine 334. A glycan (N-linked (GlcNAc...) asparagine) is linked at asparagine 350. Residues 458 to 478 (GLWLGLSVISVVEMTGLMLVM) traverse the membrane as a helical segment. Positions 462–464 (GLS) match the GAS motif; ion selectivity filter motif. The Cytoplasmic segment spans residues 479–545 (GAFCVTGGAI…NKGDEEKKKK (67 aa)). 2 stretches are compositionally biased toward basic and acidic residues: residues 514-523 (DHLEKKHGEM) and 534-545 (IENKGDEEKKKK). Residues 514–545 (DHLEKKHGEMESGSDGEVDDIENKGDEEKKKK) form a disordered region.

This sequence belongs to the amiloride-sensitive sodium channel (TC 1.A.6) family. Can form homotrimers. Heterotrimer; forms functional heterotrimers producing channel with different properties.

The protein localises to the cell membrane. It carries out the reaction Na(+)(in) = Na(+)(out). Its activity is regulated as follows. Inhibited by the diuretic drug amiloride. In terms of biological role, could form pH-gated heterotrimeric sodium channels that act as postsynaptic excitatory sensors in the nervous system, generating rapid, transient inward currents that fully desensitize upon extracellular acidification. The protein is Degenerin-like protein asic-2 (asic-2) of Caenorhabditis elegans.